Reading from the N-terminus, the 1207-residue chain is DNA-directed RNA polymerase subunit beta' (1207 aa).

4 residues coordinate Zn(2+): Cys60, Cys62, Cys75, and Cys78. Asp449, Asp451, and Asp453 together coordinate Mg(2+). Cys822, Cys896, Cys903, and Cys906 together coordinate Zn(2+).

This sequence belongs to the RNA polymerase beta' chain family. The RNAP catalytic core consists of 2 alpha, 1 beta, 1 beta' and 1 omega subunit. When a sigma factor is associated with the core the holoenzyme is formed, which can initiate transcription. It depends on Mg(2+) as a cofactor. Zn(2+) serves as cofactor.

The enzyme catalyses RNA(n) + a ribonucleoside 5'-triphosphate = RNA(n+1) + diphosphate. Functionally, DNA-dependent RNA polymerase catalyzes the transcription of DNA into RNA using the four ribonucleoside triphosphates as substrates. The protein is DNA-directed RNA polymerase subunit beta' of Staphylococcus aureus (strain NCTC 8325 / PS 47).